The primary structure comprises 166 residues: NADH-quinone oxidoreductase subunit I (166 aa).

2 consecutive 4Fe-4S ferredoxin-type domains span residues leucine 57–glutamate 87 and threonine 97–isoleucine 126. [4Fe-4S] cluster-binding residues include cysteine 67, cysteine 70, cysteine 73, cysteine 77, cysteine 106, cysteine 109, cysteine 112, and cysteine 116.

Belongs to the complex I 23 kDa subunit family. NDH-1 is composed of 14 different subunits. Subunits NuoA, H, J, K, L, M, N constitute the membrane sector of the complex. The cofactor is [4Fe-4S] cluster.

It localises to the cell inner membrane. The enzyme catalyses a quinone + NADH + 5 H(+)(in) = a quinol + NAD(+) + 4 H(+)(out). NDH-1 shuttles electrons from NADH, via FMN and iron-sulfur (Fe-S) centers, to quinones in the respiratory chain. The immediate electron acceptor for the enzyme in this species is believed to be ubiquinone. Couples the redox reaction to proton translocation (for every two electrons transferred, four hydrogen ions are translocated across the cytoplasmic membrane), and thus conserves the redox energy in a proton gradient. The chain is NADH-quinone oxidoreductase subunit I from Legionella pneumophila (strain Lens).